Reading from the N-terminus, the 354-residue chain is Caffeate O-methyltransferase-like protein 2 (354 aa).

G198, D221, M242, and K255 together coordinate S-adenosyl-L-homocysteine. H259 (proton acceptor) is an active-site residue. Catalysis depends on residues E287 and E319.

Belongs to the class I-like SAM-binding methyltransferase superfamily. Cation-independent O-methyltransferase family. COMT subfamily.

The polypeptide is Caffeate O-methyltransferase-like protein 2 (Oryza sativa subsp. japonica (Rice)).